The chain runs to 943 residues: WD repeat-containing protein 3 (943 aa).

5 WD repeats span residues 21–60 (SQKG…KILI), 63–102 (GLKQ…GNVT), 105–144 (GHKA…GLYR), 147–186 (GHKD…CFKT), and 189–228 (GHRT…EIED). Ser240 and Ser241 each carry phosphoserine. Thr257 bears the Phosphothreonine mark. One copy of the WD 6 repeat lies at 277–316 (EGRDRVVNLAVDKTGRILACHGTDSVLELFCILSKKEIQK). The disordered stretch occupies residues 326–345 (RKKAKLHSSKGEEEDPEVNV). WD repeat units follow at residues 413 to 451 (GHRS…CIRT), 453 to 493 (TCEY…ETID), 494 to 533 (AHDG…DENS), 547 to 586 (QLDE…FFLS), 589 to 630 (GHKL…KSLF), 631 to 670 (AHDD…HIQT), and 673 to 712 (GHHQ…LILE). Residues Lys474 and Lys529 each participate in a glycyl lysine isopeptide (Lys-Gly) (interchain with G-Cter in SUMO2) cross-link. Phosphoserine is present on Ser726.

Belongs to the WD repeat WDR3/UTP12 family. As to quaternary structure, part of the small subunit (SSU) processome, composed of more than 70 proteins and the RNA chaperone small nucleolar RNA (snoRNA) U3. Ubiquitous.

The protein resides in the nucleus. It localises to the nucleolus. Functionally, part of the small subunit (SSU) processome, first precursor of the small eukaryotic ribosomal subunit. During the assembly of the SSU processome in the nucleolus, many ribosome biogenesis factors, an RNA chaperone and ribosomal proteins associate with the nascent pre-rRNA and work in concert to generate RNA folding, modifications, rearrangements and cleavage as well as targeted degradation of pre-ribosomal RNA by the RNA exosome. The polypeptide is WD repeat-containing protein 3 (Homo sapiens (Human)).